Here is a 478-residue protein sequence, read N- to C-terminus: Monocarboxylate transporter 2 (478 aa).

Residues 1-15 (MPPMPSAPPVHPPPD) lie on the Cytoplasmic side of the membrane. The chain crosses the membrane as a helical span at residues 16-36 (GGWGWIVVGAAFISIGFSYAF). The Extracellular portion of the chain corresponds to 37 to 59 (PKAVTVFFKEIQQIFHTTYSEIA). Residues 60 to 80 (WISSIMLAVMYAGGPVSSVLV) form a helical membrane-spanning segment. Residues 81–89 (NKYGSRPVV) lie on the Cytoplasmic side of the membrane. Residues 90–110 (IAGGLLCCLGMVLASFSSSVV) traverse the membrane as a helical segment. Topologically, residues 111 to 115 (QLYLT) are extracellular. Residues 116 to 136 (MGFITGLGLAFNLQPALTIIG) form a helical membrane-spanning segment. At 137–148 (KYFYRKRPMANG) the chain is on the cytoplasmic side. The chain crosses the membrane as a helical span at residues 149-169 (LAMAGSPVFLSSLAPFNQYLF). The Extracellular portion of the chain corresponds to 170–173 (NTFG). Residues 174-194 (WKGSFLILGSLLLNACVAGSL) traverse the membrane as a helical segment. Topologically, residues 195-246 (MRPLGPNQTTSKSKNKTGKTEDDSSPKKIKTKKSTWEKVNKYLDFSLFKHRG) are cytoplasmic. The disordered stretch occupies residues 200–224 (PNQTTSKSKNKTGKTEDDSSPKKIK). The chain crosses the membrane as a helical span at residues 247–267 (FLIYLSGNVIMFLGFFAPIIF). The Extracellular portion of the chain corresponds to 268–282 (LAPYAKDQGIDEYSA). The chain crosses the membrane as a helical span at residues 283–303 (AFLLSVMAFVDMFARPSVGLI). Residues 304-312 (ANSKYIRPR) are Cytoplasmic-facing. The helical transmembrane segment at 313 to 333 (IQYFFSFAIMFNGVCHLLCPL) threads the bilayer. The Extracellular portion of the chain corresponds to 334–338 (AQDYT). The chain crosses the membrane as a helical span at residues 339–359 (SLVLYAVFFGLGFGSVSSVLF). Residues 360–373 (ETLMDLVGAPRFSS) are Cytoplasmic-facing. The helical transmembrane segment at 374–394 (AVGLVTIVECGPVLLGPPLAG) threads the bilayer. The Extracellular portion of the chain corresponds to 395 to 406 (KLVDLTGEYKYM). A helical membrane pass occupies residues 407–427 (YMSCGAIVVAASVWLLIGNAI). Residues 428–478 (NYRLLAKERKEENARQKTRESEPLSKSKHSEDVNVKVSNAQSVTSERETNI) are Cytoplasmic-facing. The span at 437–461 (KEENARQKTRESEPLSKSKHSEDVN) shows a compositional bias: basic and acidic residues. A disordered region spans residues 437-478 (KEENARQKTRESEPLSKSKHSEDVNVKVSNAQSVTSERETNI).

This sequence belongs to the major facilitator superfamily. Monocarboxylate porter (TC 2.A.1.13) family. As to quaternary structure, homodimer. Interacts with GRID2IP. Interacts with EMB; interaction mediates SLC16A7 targeting to the plasma membrane. Interacts with isoform 2 of BSG. As to expression, detected in heart and in blood lymphocytes and monocytes (at protein level). High expression in testis, moderate to low in spleen, heart, kidney, pancreas, skeletal muscle, brain and leukocyte. Restricted expression in normal tissues, but widely expressed in cancer cells.

The protein localises to the cell membrane. Its subcellular location is the basolateral cell membrane. The protein resides in the cytoplasm. It catalyses the reaction pyruvate(out) + H(+)(out) = pyruvate(in) + H(+)(in). It carries out the reaction 3-methyl-2-oxobutanoate(out) + H(+)(out) = 3-methyl-2-oxobutanoate(in) + H(+)(in). The enzyme catalyses (S)-lactate(in) + H(+)(in) = (S)-lactate(out) + H(+)(out). The catalysed reaction is acetoacetate(out) + H(+)(out) = acetoacetate(in) + H(+)(in). It catalyses the reaction (R)-3-hydroxybutanoate(out) + H(+)(out) = (R)-3-hydroxybutanoate(in) + H(+)(in). It carries out the reaction 4-methyl-2-oxopentanoate(out) + H(+)(out) = 4-methyl-2-oxopentanoate(in) + H(+)(in). The enzyme catalyses (S)-3-hydroxybutanoate(out) + H(+)(out) = (S)-3-hydroxybutanoate(in) + H(+)(in). Its activity is regulated as follows. Transport activity exhibits steep dependence on substrate concentration. Substrate concentration sensitivity of SLC16A7 arises from the strong inter-subunit cooperativity of the SLC16A7 dimer during transport. Inhibited by AR-C155858. In terms of biological role, proton-coupled monocarboxylate symporter. Catalyzes the rapid transport across the plasma membrane of monocarboxylates such as L-lactate, pyruvate and ketone bodies, acetoacetate, beta-hydroxybutyrate and acetate. Dimerization is functionally required and both subunits work cooperatively in transporting substrate. The protein is Monocarboxylate transporter 2 of Homo sapiens (Human).